Consider the following 262-residue polypeptide: Orotidine 5'-phosphate decarboxylase (262 aa).

Residues Asp35, Lys57–His59, Asp89–Thr98, Tyr215, and Arg233 each bind substrate. Catalysis depends on Lys91, which acts as the Proton donor.

This sequence belongs to the OMP decarboxylase family.

The enzyme catalyses orotidine 5'-phosphate + H(+) = UMP + CO2. The protein operates within pyrimidine metabolism; UMP biosynthesis via de novo pathway; UMP from orotate: step 2/2. The protein is Orotidine 5'-phosphate decarboxylase (URA3) of Pichia kudriavzevii (Yeast).